Consider the following 119-residue polypeptide: Short coiled-coil protein A (119 aa).

Positions Met-1–Gly-10 are enriched in acidic residues. Positions Met-1 to Pro-26 are disordered. The stretch at Met-48 to Leu-95 forms a coiled coil.

The protein belongs to the SCOC family.

The protein resides in the golgi apparatus membrane. It is found in the golgi apparatus. The protein localises to the trans-Golgi network. It localises to the cytoplasm. Its subcellular location is the cytosol. In terms of biological role, positive regulator of amino acid starvation-induced autophagy. The chain is Short coiled-coil protein A (scoca) from Danio rerio (Zebrafish).